Here is a 118-residue protein sequence, read N- to C-terminus: Large ribosomal subunit protein bL19 (118 aa).

It belongs to the bacterial ribosomal protein bL19 family.

In terms of biological role, this protein is located at the 30S-50S ribosomal subunit interface and may play a role in the structure and function of the aminoacyl-tRNA binding site. The sequence is that of Large ribosomal subunit protein bL19 from Geobacter sulfurreducens (strain ATCC 51573 / DSM 12127 / PCA).